Consider the following 628-residue polypeptide: Dual specificity testis-specific protein kinase 1 (628 aa).

The disordered stretch occupies residues 1–35; that stretch reads MAGERPPLRGPGPGETPVEGPGGAGGGPGRGRPSS. Over residues 20–30 the composition is skewed to gly residues; the sequence is GPGGAGGGPGR. Residues 52–310 enclose the Protein kinase domain; sequence FDCAEKIGAG…EITQHLEQIL (259 aa). Residues 58–66 and Lys81 each bind ATP; that span reads IGAGFFSEV. The active-site Proton acceptor is the Asp170. Residue Ser215 is modified to Phosphoserine; by autocatalysis. 3 disordered regions span residues 330 to 376, 424 to 490, and 538 to 568; these read TYNQ…DNLT, PESL…QLPL, and RAQHSLPRAAALERTEPSPPPSAPREQEEGL. The residue at position 338 (Arg338) is an Omega-N-methylarginine. The span at 348–357 shows a compositional bias: basic and acidic residues; it reads SDPRLSRSRS. Residues 421-526 form a required for interaction with YWHAB region; the sequence is VASPESLVQP…NNNPPAVVVN (106 aa). A Phosphoserine modification is found at Ser439. Residues 478 to 487 are compositionally biased toward pro residues; it reads EPEPPGPAPQ. The segment at 529–626 is required for interaction with PARVA; it reads QGWAREPWNR…PTPSLQLPGA (98 aa). The required for interaction with SPRED1 and SPRY2. Required for TESK1-mediated dephosphorylation of SPRY2 and SPRY2 inhibition of ERK phosphorylation stretch occupies residues 529–628; that stretch reads QGWAREPWNR…PSLQLPGARS (100 aa).

The protein belongs to the protein kinase superfamily. TKL Ser/Thr protein kinase family. As to quaternary structure, interacts (via both C- and N-termini) with SPRY4 (via C-terminus); the interaction inhibits TESK1 kinase activity. Interacts with TAOK1; the interaction inhibits TAOK1 kinase activity. Interacts (via C-terminus) with SPRED1 (via C-terminus); the interaction inhibits TESK1 kinase activity. Interacts (via C-terminus) with PARVA/PARVIN (via C-terminus); the interaction inhibits TESK1 kinase activity. Interacts with YWHAB/14-3-3 beta; the interaction is dependent on the phosphorylation of TESK1 Ser-439 and inhibits TESK1 kinase activity. Interacts with SPRY1, SPRY3 and SPRED2. Interacts (via C-terminus) with SPRY2 (via C-terminus); the interaction disrupts SPRY2 interaction with PPP2CA/PP2A-C, possibly by vesicular sequestration of SPRY2. Therefore dephosphorylation of SPRY2 by the serine/threonine-protein phosphatase 2A (PP2A) holoenzyme is lost, inhibiting its interaction with GRB2. Mg(2+) serves as cofactor. Requires Mn(2+) as cofactor. Autophosphorylated on serine and tyrosine residues. In terms of tissue distribution, weakly expressed in sciatic nerves (at protein level). Highly expressed in testicular germ cells. Expressed at low levels in brain, lung, heart, liver and kidney.

It localises to the cytoplasm. Its subcellular location is the perinuclear region. The protein localises to the cytoskeleton. It is found in the microtubule organizing center. The protein resides in the centrosome. It localises to the cell projection. Its subcellular location is the lamellipodium. The enzyme catalyses L-seryl-[protein] + ATP = O-phospho-L-seryl-[protein] + ADP + H(+). The catalysed reaction is L-threonyl-[protein] + ATP = O-phospho-L-threonyl-[protein] + ADP + H(+). It catalyses the reaction L-tyrosyl-[protein] + ATP = O-phospho-L-tyrosyl-[protein] + ADP + H(+). Activated by autophosphorylation on Ser-215. Kinase activity is inhibited by SPRED1. Functionally, dual specificity protein kinase activity catalyzing autophosphorylation and phosphorylation of exogenous substrates on both serine/threonine and tyrosine residues. Regulates the cellular cytoskeleton by enhancing actin stress fiber formation via phosphorylation of cofilin and by preventing microtubule breakdown via inhibition of TAOK1/MARKK kinase activity. Inhibits podocyte motility via regulation of actin cytoskeletal dynamics and phosphorylation of CFL1. Positively regulates integrin-mediated cell spreading, via phosphorylation of cofilin. Suppresses ciliogenesis via multiple pathways; phosphorylation of CFL1, suppression of ciliary vesicle directional trafficking to the ciliary base, and by facilitating YAP1 nuclear localization where it acts as a transcriptional corepressor of the TEAD4 target genes AURKA and PLK1. Probably plays a central role at and after the meiotic phase of spermatogenesis. The protein is Dual specificity testis-specific protein kinase 1 (Tesk1) of Rattus norvegicus (Rat).